The following is a 392-amino-acid chain: SH3 domain-binding protein 5-like (392 aa).

The tract at residues 1 to 57 (MADLKKAAGGRETPQGELRSEVVEDEGPRSPVAEEPGGSGSNSSETKLSPREEEELD) is disordered. Residue Thr-13 is modified to Phosphothreonine. Positions 18–28 (LRSEVVEDEGP) are enriched in basic and acidic residues. Residues Ser-30 and Ser-49 each carry the phosphoserine modification. 2 coiled-coil regions span residues 59–140 (RIQE…YERA) and 169–272 (WQEM…EQIH). Positions 275–332 (RRGLPPHPLGPRRSSPVGAEAGPEGIEDGDSGIEGAEGGGLEEGSSLGPGPGPDTDTL) are disordered. Low complexity predominate over residues 317-332 (EGSSLGPGPGPDTDTL). Phosphoserine occurs at positions 342, 349, 357, 361, and 377. Positions 364-392 (GQELGAQSRGRRGSDIGVRGGRHQRSVSL) are disordered. Basic residues predominate over residues 383–392 (GGRHQRSVSL).

The protein belongs to the SH3BP5 family.

In terms of biological role, functions as a guanine nucleotide exchange factor (GEF) for RAB11A. In Mus musculus (Mouse), this protein is SH3 domain-binding protein 5-like (Sh3bp5l).